Here is a 134-residue protein sequence, read N- to C-terminus: Putative pre-16S rRNA nuclease (134 aa).

This sequence belongs to the YqgF nuclease family.

It is found in the cytoplasm. Its function is as follows. Could be a nuclease involved in processing of the 5'-end of pre-16S rRNA. The protein is Putative pre-16S rRNA nuclease of Helicobacter pylori (strain J99 / ATCC 700824) (Campylobacter pylori J99).